The sequence spans 236 residues: Aspartate/glutamate leucyltransferase (236 aa).

The protein belongs to the R-transferase family. Bpt subfamily.

The protein localises to the cytoplasm. It carries out the reaction N-terminal L-glutamyl-[protein] + L-leucyl-tRNA(Leu) = N-terminal L-leucyl-L-glutamyl-[protein] + tRNA(Leu) + H(+). It catalyses the reaction N-terminal L-aspartyl-[protein] + L-leucyl-tRNA(Leu) = N-terminal L-leucyl-L-aspartyl-[protein] + tRNA(Leu) + H(+). Its function is as follows. Functions in the N-end rule pathway of protein degradation where it conjugates Leu from its aminoacyl-tRNA to the N-termini of proteins containing an N-terminal aspartate or glutamate. This chain is Aspartate/glutamate leucyltransferase, found in Saccharophagus degradans (strain 2-40 / ATCC 43961 / DSM 17024).